A 306-amino-acid chain; its full sequence is Nod factor export ATP-binding protein I (306 aa).

The ABC transporter domain occupies 8-238 (IDLVGVRKSF…HIGCNVIEIY (231 aa)). Position 40–47 (40–47 (GPNGAGKS)) interacts with ATP.

Belongs to the ABC transporter superfamily. Lipooligosaccharide exporter (TC 3.A.1.102) family. In terms of assembly, the complex is composed of two ATP-binding proteins (NodI) and two transmembrane proteins (NodJ).

It localises to the cell inner membrane. Functionally, part of the ABC transporter complex NodIJ involved in the export of the nodulation factors (Nod factors), the bacterial signal molecules that induce symbiosis and subsequent nodulation induction. Nod factors are LCO (lipo-chitin oligosaccharide), a modified beta-1,4-linked N-acetylglucosamine oligosaccharide. This subunit is responsible for energy coupling to the transport system. The chain is Nod factor export ATP-binding protein I from Bradyrhizobium diazoefficiens (strain JCM 10833 / BCRC 13528 / IAM 13628 / NBRC 14792 / USDA 110).